The chain runs to 137 residues: Small ribosomal subunit protein uS9 (137 aa).

Residues Lys-106–Ala-117 are compositionally biased toward basic and acidic residues. The disordered stretch occupies residues Lys-106–Arg-137. Basic residues predominate over residues Lys-118–Arg-137.

This sequence belongs to the universal ribosomal protein uS9 family.

The chain is Small ribosomal subunit protein uS9 from Thermosynechococcus vestitus (strain NIES-2133 / IAM M-273 / BP-1).